Reading from the N-terminus, the 510-residue chain is Light-independent protochlorophyllide reductase subunit B (510 aa).

D36 contributes to the [4Fe-4S] cluster binding site. D296 serves as the catalytic Proton donor. 431–432 (GM) provides a ligand contact to substrate.

Belongs to the ChlB/BchB/BchZ family. Protochlorophyllide reductase is composed of three subunits; ChlL, ChlN and ChlB. Forms a heterotetramer of two ChlB and two ChlN subunits. The cofactor is [4Fe-4S] cluster.

It carries out the reaction chlorophyllide a + oxidized 2[4Fe-4S]-[ferredoxin] + 2 ADP + 2 phosphate = protochlorophyllide a + reduced 2[4Fe-4S]-[ferredoxin] + 2 ATP + 2 H2O. Its pathway is porphyrin-containing compound metabolism; chlorophyll biosynthesis (light-independent). Component of the dark-operative protochlorophyllide reductase (DPOR) that uses Mg-ATP and reduced ferredoxin to reduce ring D of protochlorophyllide (Pchlide) to form chlorophyllide a (Chlide). This reaction is light-independent. The NB-protein (ChlN-ChlB) is the catalytic component of the complex. The sequence is that of Light-independent protochlorophyllide reductase subunit B from Synechococcus sp. (strain JA-2-3B'a(2-13)) (Cyanobacteria bacterium Yellowstone B-Prime).